The primary structure comprises 313 residues: Cytochrome f (313 aa).

An N-terminal signal peptide occupies residues 1–31 (MQNMFSFLSNKKIIALFLIIGTIFMPLSSEA). 4 residues coordinate heme: Tyr32, Cys52, Cys55, and His56. Residues 279-298 (IKWLIAFLILSTLGQVFLVL) traverse the membrane as a helical segment.

The protein belongs to the cytochrome f family. As to quaternary structure, the 4 large subunits of the cytochrome b6-f complex are cytochrome b6, subunit IV (17 kDa polypeptide, petD), cytochrome f and the Rieske protein, while the 4 small subunits are PetG, PetL, PetM and PetN. The complex functions as a dimer. It depends on heme as a cofactor.

The protein resides in the plastid. Its subcellular location is the chloroplast thylakoid membrane. Functionally, component of the cytochrome b6-f complex, which mediates electron transfer between photosystem II (PSII) and photosystem I (PSI), cyclic electron flow around PSI, and state transitions. The chain is Cytochrome f (petA) from Mesostigma viride (Green alga).